We begin with the raw amino-acid sequence, 651 residues long: Peptide-N(4)-(N-acetyl-beta-glucosaminyl)asparagine amidase (651 aa).

N-acetylalanine is present on Ala2. One can recognise a PUB domain in the interval 30–91 (EASKLLLTYA…EGETHLIFPK (62 aa)). Zn(2+) is bound by residues Cys247, Cys250, Cys280, and Cys283. Cys306 acts as the Nucleophile in catalysis. Catalysis depends on residues His333 and Asp350. In terms of domain architecture, PAW spans 451-651 (ELGGRVSGSL…LEIIITFNDL (201 aa)).

The protein belongs to the transglutaminase-like superfamily. PNGase family. In terms of assembly, component of a complex required to couple retrotranslocation, ubiquitination and deglycosylation composed of NGLY1, SAKS1, AMFR, VCP and RAD23B. Interacts with the proteasome components RAD23B and PSMC1. Interacts with directly with VCP. Interacts with DERL1, bringing it close to the endoplasmic reticulum membrane. Interacts with SAKS1. Zn(2+) serves as cofactor. Ubiquitously expressed with highest level in testis.

The protein localises to the cytoplasm. It carries out the reaction Hydrolysis of an N(4)-(acetyl-beta-D-glucosaminyl)asparagine residue in which the glucosamine residue may be further glycosylated, to yield a (substituted) N-acetyl-beta-D-glucosaminylamine and a peptide containing an aspartate residue.. With respect to regulation, inhibited by Z-VAD-fmk, a well-known caspase inhibitor, which inhibits enzyme activity through covalent binding of the carbohydrate to the single Cys-306 residue. Its function is as follows. Specifically deglycosylates the denatured form of N-linked glycoproteins in the cytoplasm and assists their proteasome-mediated degradation. Cleaves the beta-aspartyl-glucosamine (GlcNAc) of the glycan and the amide side chain of Asn, converting Asn to Asp. Prefers proteins containing high-mannose over those bearing complex type oligosaccharides. Can recognize misfolded proteins in the endoplasmic reticulum that are exported to the cytosol to be destroyed and deglycosylate them, while it has no activity toward native proteins. Deglycosylation is a prerequisite for subsequent proteasome-mediated degradation of some, but not all, misfolded glycoproteins. The polypeptide is Peptide-N(4)-(N-acetyl-beta-glucosaminyl)asparagine amidase (Ngly1) (Mus musculus (Mouse)).